The sequence spans 231 residues: 2-C-methyl-D-erythritol 2,4-cyclodiphosphate synthase, chloroplastic (231 aa).

Residues 1–52 (MATSSTQLLLSSSSLFHSQITKKPFLLPATKIGVWRPKKSLSLSCRPSASVS) constitute a chloroplast transit peptide. A divalent metal cation is bound by residues Asp-82 and His-84. Residues 82–84 (DLH), 108–109 (HS), 112–120 (DVLLHCVVD), 130–132 (DIG), 135–139 (FPDSD), Asp-139, 174–180 (LQRPKIS), and 205–209 (AKTHE) each bind substrate. His-116 serves as a coordination point for a divalent metal cation.

The protein belongs to the IspF family. As to quaternary structure, homotrimer. The cofactor is a divalent metal cation.

It is found in the plastid. It localises to the chloroplast stroma. The catalysed reaction is 4-CDP-2-C-methyl-D-erythritol 2-phosphate = 2-C-methyl-D-erythritol 2,4-cyclic diphosphate + CMP. Its pathway is isoprenoid biosynthesis; isopentenyl diphosphate biosynthesis via DXP pathway; isopentenyl diphosphate from 1-deoxy-D-xylulose 5-phosphate: step 4/6. Functionally, enzyme of the plastid non-mevalonate pathway for isoprenoid biosynthesis that converts 4-diphosphocytidyl-2C-methyl-D-erythritol 2-phosphate into 2C-methyl-D-erythritol 2,4-cyclodiphosphate and CMP. Is essential for chloroplast development. The protein is 2-C-methyl-D-erythritol 2,4-cyclodiphosphate synthase, chloroplastic of Arabidopsis thaliana (Mouse-ear cress).